The sequence spans 165 residues: (2E)-enoyl-[ACP] glycyltransferase (165 aa).

This sequence belongs to the FcoT family.

It catalyses the reaction a (3R)-3-[(carboxymethyl)amino]fatty acid + holo-[ACP] + H(+) = a (2E)-enoyl-[ACP] + glycine + H2O. The enzyme catalyses (3R)-3-[(carboxymethyl)amino]butanoate + holo-[ACP] + H(+) = (2E)-butenoyl-[ACP] + glycine + H2O. Functionally, involved in the biosynthesis of a unique class of isonitrile lipopeptides (INLPs). Catalyzes a Michael addition of glycine to the beta-position of an alpha,beta-unsaturated fatty acyl-[ACP], producing a (3R)-3-[(carboxymethyl)amino]fatty acid. Acts on the (2E)-butenoyl moiety loaded on the acyl-carrier protein ScoB, forming the product (3R)-3-[(carboxymethyl)amino]butanoate released from ScoB. This is (2E)-enoyl-[ACP] glycyltransferase from Streptomyces coeruleorubidus.